The sequence spans 192 residues: MELLGQKVKEDGVVIDEKILKVDGFLNHQIDAKLMNEVGRTFYEQFKDKGITKILTIEASGIAPAIMAALHFDVPCLFAKKAKPSTLTDGYYETSIHSFTKNKTSTVIVSKEFLSEEDTVLIIDDFLANGDASLGLYDIAQQANAKTAGIGIVVEKSFQNGHQRLEEAGLTVSSLCKVASLEGNKVTLVVEE.

Residues Leu-20 and Asn-27 each coordinate xanthine. 128–132 (ANGDA) is a binding site for 5-phospho-alpha-D-ribose 1-diphosphate. Residue Lys-156 participates in xanthine binding.

This sequence belongs to the purine/pyrimidine phosphoribosyltransferase family. Xpt subfamily. As to quaternary structure, homodimer.

It localises to the cytoplasm. The enzyme catalyses XMP + diphosphate = xanthine + 5-phospho-alpha-D-ribose 1-diphosphate. It functions in the pathway purine metabolism; XMP biosynthesis via salvage pathway; XMP from xanthine: step 1/1. In terms of biological role, converts the preformed base xanthine, a product of nucleic acid breakdown, to xanthosine 5'-monophosphate (XMP), so it can be reused for RNA or DNA synthesis. In Staphylococcus aureus (strain JH1), this protein is Xanthine phosphoribosyltransferase.